The primary structure comprises 1387 residues: Regulator of G-protein signaling 12 (1387 aa).

A PDZ domain is found at serine 21 to glycine 97. Serine 171 and serine 194 each carry phosphoserine. Lysine 195 participates in a covalent cross-link: Glycyl lysine isopeptide (Lys-Gly) (interchain with G-Cter in SUMO2). The region spanning valine 227 to phenylalanine 339 is the PID domain. 2 disordered regions span residues alanine 409–phenylalanine 428 and leucine 442–threonine 488. The segment covering histidine 412 to phenylalanine 428 has biased composition (polar residues). 2 positions are modified to omega-N-methylarginine: arginine 524 and arginine 633. Residues arginine 620–phenylalanine 650 form a disordered region. Residues serine 661 and serine 671 each carry the phosphoserine modification. The RGS domain occupies serine 715–valine 832. The tract at residues proline 842–serine 934 is disordered. The span at serine 849–lysine 869 shows a compositional bias: low complexity. Residues serine 850 and serine 879 each carry the phosphoserine modification. Residues aspartate 914–leucine 923 show a composition bias toward basic and acidic residues. Serine 943 carries the phosphoserine modification. RBD domains are found at residues lysine 962–arginine 1032 and leucine 1034–arginine 1104. The span at glutamate 1103–lysine 1117 shows a compositional bias: basic and acidic residues. Residues glutamate 1103–glutamate 1168 form a disordered region. Positions lysine 1122 to asparagine 1133 are enriched in polar residues. Basic and acidic residues predominate over residues isoleucine 1151 to glutamate 1168. The region spanning alanine 1187–leucine 1209 is the GoLoco domain. Disordered regions lie at residues proline 1224–threonine 1325 and alanine 1349–phenylalanine 1387. The span at serine 1261–proline 1280 shows a compositional bias: low complexity. Polar residues predominate over residues serine 1315–threonine 1325. Residues leucine 1367 to threonine 1380 are compositionally biased toward pro residues.

As to quaternary structure, interacts with GNAI1, GNAI2 and GNAI3; the interactions are GDP-dependent. As to expression, detected in brain cortex GABAergic neurons, in striatum and substantia nigra, and in the Purkinje cell layer in the cerebellum and hippocampus (at protein level). Expressed at high levels in brain and lung and lower levels in testis, heart, and spleen.

The protein localises to the nucleus. It is found in the cytoplasm. It localises to the cell projection. The protein resides in the dendrite. Its subcellular location is the synapse. Its function is as follows. Regulates G protein-coupled receptor signaling cascades. Inhibits signal transduction by increasing the GTPase activity of G protein alpha subunits, thereby driving them into their inactive GDP-bound form. The sequence is that of Regulator of G-protein signaling 12 (Rgs12) from Rattus norvegicus (Rat).